The sequence spans 912 residues: Multiple C2 and transmembrane domain-containing protein (912 aa).

The segment covering 1–33 (MSRIQYVDQVDQVELDQQQQPGSSSTVSGSTPP) has biased composition (low complexity). 2 disordered regions span residues 1–80 (MSRI…KRAK) and 145–165 (SSEG…IGGS). Positions 38 to 49 (PHGSPSLQQSQR) are enriched in polar residues. C2 domains follow at residues 218–337 (QANE…HLQL), 371–493 (RNSK…HLML), and 522–637 (ERYK…TLKD). Positions 252, 258, 305, 307, and 313 each coordinate Ca(2+). Residues aspartate 553, aspartate 559, aspartate 605, and aspartate 607 each contribute to the Ca(2+) site. The next 2 membrane-spanning stretches (helical) occupy residues 729 to 749 (IVAC…LIIL) and 826 to 846 (LTWL…FVPL). The segment at 887–912 (NQYRELPPSAPTDQTRNNPKKKLKGS) is disordered.

The cofactor is Ca(2+). In terms of tissue distribution, motor neurons (at protein level).

It localises to the endoplasmic reticulum membrane. In terms of biological role, calcium sensor which is essential for the stabilization of normal baseline neurotransmitter release and for the induction and long-term maintenance of presynaptic homeostatic plasticity. This Drosophila melanogaster (Fruit fly) protein is Multiple C2 and transmembrane domain-containing protein.